A 268-amino-acid chain; its full sequence is Energy-coupling factor transporter transmembrane protein EcfT (268 aa).

A run of 6 helical transmembrane segments spans residues 26–46 (ILAV…LSYG), 47–67 (ILIG…GLLL), 73–93 (LWII…GEAL), 116–136 (LVLL…IVLT), 151–171 (VPAH…PTLL), and 246–266 (ALTG…RWGI).

Belongs to the energy-coupling factor EcfT family. In terms of assembly, forms a stable energy-coupling factor (ECF) transporter complex composed of 2 membrane-embedded substrate-binding proteins (S component), 2 ATP-binding proteins (A component) and 2 transmembrane proteins (T component). May be able to interact with more than 1 S component at a time.

Its subcellular location is the cell membrane. In terms of biological role, transmembrane (T) component of an energy-coupling factor (ECF) ABC-transporter complex. Unlike classic ABC transporters this ECF transporter provides the energy necessary to transport a number of different substrates. The chain is Energy-coupling factor transporter transmembrane protein EcfT from Acidaminococcus fermentans (strain ATCC 25085 / DSM 20731 / CCUG 9996 / CIP 106432 / VR4).